Reading from the N-terminus, the 341-residue chain is Anthranilate phosphoribosyltransferase (341 aa).

5-phospho-alpha-D-ribose 1-diphosphate-binding positions include Gly82, 85-86 (GD), Thr90, 92-95 (NIST), 110-118 (KHGGRSVSG), and Ser122. Residue Gly82 coordinates anthranilate. Residue Ser94 coordinates Mg(2+). Arg168 serves as a coordination point for anthranilate. Residues Asp227 and Glu228 each coordinate Mg(2+).

This sequence belongs to the anthranilate phosphoribosyltransferase family. In terms of assembly, homodimer. Mg(2+) serves as cofactor.

The enzyme catalyses N-(5-phospho-beta-D-ribosyl)anthranilate + diphosphate = 5-phospho-alpha-D-ribose 1-diphosphate + anthranilate. Its pathway is amino-acid biosynthesis; L-tryptophan biosynthesis; L-tryptophan from chorismate: step 2/5. Functionally, catalyzes the transfer of the phosphoribosyl group of 5-phosphorylribose-1-pyrophosphate (PRPP) to anthranilate to yield N-(5'-phosphoribosyl)-anthranilate (PRA). The protein is Anthranilate phosphoribosyltransferase of Nitrosomonas europaea (strain ATCC 19718 / CIP 103999 / KCTC 2705 / NBRC 14298).